The following is a 430-amino-acid chain: tRNA(Ile)-lysidine synthase (430 aa).

21–26 contributes to the ATP binding site; that stretch reads SGGLDS.

This sequence belongs to the tRNA(Ile)-lysidine synthase family.

It localises to the cytoplasm. The enzyme catalyses cytidine(34) in tRNA(Ile2) + L-lysine + ATP = lysidine(34) in tRNA(Ile2) + AMP + diphosphate + H(+). Functionally, ligates lysine onto the cytidine present at position 34 of the AUA codon-specific tRNA(Ile) that contains the anticodon CAU, in an ATP-dependent manner. Cytidine is converted to lysidine, thus changing the amino acid specificity of the tRNA from methionine to isoleucine. The chain is tRNA(Ile)-lysidine synthase from Salmonella heidelberg (strain SL476).